A 325-amino-acid chain; its full sequence is Gamma-hemolysin component B (325 aa).

The signal sequence occupies residues 1–26 (MKMNKLVKSSVATSMALLLLSGTANA).

Belongs to the aerolysin family. As to quaternary structure, toxicity requires sequential binding and synergistic association of a class S and a class F component which form heterooligomeric complexes. HlgB (class F) associates with either hlgA thus forming an AB toxin or with hlgC thus forming a CB toxin. Interacts with host AMFR.

It localises to the secreted. Functionally, toxin that seems to act by forming pores in the membrane of the cell. Has a hemolytic and a leucotoxic activity. Promotes host AMFR-mediated inflammation by mediating 'Lys-27'-linked ubiquitination of TAB3, TAK1-TAB3 complex formation and phosphorylation of TAK1/MAP3K7. In turn, activates host NF-kappa-B signaling pathway. The protein is Gamma-hemolysin component B (hlgB) of Staphylococcus aureus (strain NCTC 8325 / PS 47).